The chain runs to 247 residues: UPF0259 membrane protein BUsg_265 (247 aa).

6 helical membrane-spanning segments follow: residues 20-40 (IKII…INVL), 82-102 (IFKI…IITL), 114-134 (IQFS…LNFI), 137-157 (FFIQ…SVLL), 188-208 (IVGT…TVFS), and 217-237 (FIFL…IVYL).

The protein belongs to the UPF0259 family.

The protein resides in the cell membrane. This Buchnera aphidicola subsp. Schizaphis graminum (strain Sg) protein is UPF0259 membrane protein BUsg_265.